Here is a 272-residue protein sequence, read N- to C-terminus: METYAVFGNPIAHSKSPFIHQQFAQQLNIEHPYGRVLAPINDFINTLNTFFSAGGKGANVTVPFKEEAFARADELTERAALAGAVNTLKRLEDGRLLGDNTDGIGLLSDLERLSFIRPGLRILLIGAGGASRGVLLPLLSLDRAVTITNRTVSRAEELTKLFAHTGSIQALGMDELEGHEFDLIINATSSGISGDIPAIPSSLIHPGIYCYDMFYQKGKTPFLAWCEQRGSKRNADGLGMLVAQAAHAFLLWHGVLPDVEPVIKLLQQELSA.

Shikimate is bound by residues 14–16 and T61; that span reads SKS. The active-site Proton acceptor is the K65. E77 lines the NADP(+) pocket. Shikimate is bound by residues N86 and D102. NADP(+) is bound by residues 126 to 130, 149 to 154, and M213; these read GAGGA and NRTVSR. Residue Y215 participates in shikimate binding. G237 serves as a coordination point for NADP(+).

This sequence belongs to the shikimate dehydrogenase family. As to quaternary structure, homodimer.

It carries out the reaction shikimate + NADP(+) = 3-dehydroshikimate + NADPH + H(+). Its pathway is metabolic intermediate biosynthesis; chorismate biosynthesis; chorismate from D-erythrose 4-phosphate and phosphoenolpyruvate: step 4/7. In terms of biological role, involved in the biosynthesis of the chorismate, which leads to the biosynthesis of aromatic amino acids. Catalyzes the reversible NADPH linked reduction of 3-dehydroshikimate (DHSA) to yield shikimate (SA). The polypeptide is Shikimate dehydrogenase (NADP(+)) (Escherichia coli O81 (strain ED1a)).